Consider the following 136-residue polypeptide: Histone H3.3C-like (136 aa).

An Asymmetric dimethylarginine; by PRMT6; alternate modification is found at R3. Citrulline; alternate is present on R3. Phosphothreonine; by HASPIN is present on T4. Residue K5 is modified to Allysine; alternate. An N6,N6,N6-trimethyllysine; alternate modification is found at K5. K5 is subject to N6,N6-dimethyllysine; alternate. N6-(2-hydroxyisobutyryl)lysine; alternate is present on K5. At K5 the chain carries N6-(beta-hydroxybutyryl)lysine; alternate. K5 is modified (N6-acetyllysine; alternate). Residue K5 is modified to N6-methyllysine; alternate. T7 carries the phosphothreonine; by PKC modification. K10 is modified (N6,N6,N6-trimethyllysine; alternate). N6,N6-dimethyllysine; alternate is present on K10. K10 bears the N6-(2-hydroxyisobutyryl)lysine; alternate mark. K10 carries the N6-acetyllysine; alternate modification. K10 carries the post-translational modification N6-methyllysine; alternate. Residue S11 is modified to ADP-ribosylserine; alternate. A Phosphoserine; alternate; by AURKB, AURKC, RPS6KA3, RPS6KA4 and RPS6KA5 modification is found at S11. T12 is subject to Phosphothreonine; by PKC. K15 carries the N6-(2-hydroxyisobutyryl)lysine; alternate modification. K15 bears the N6-(beta-hydroxybutyryl)lysine; alternate mark. An N6-acetyllysine; alternate modification is found at K15. K15 carries the post-translational modification N6-glutaryllysine; alternate. N6-succinyllysine; alternate is present on K15. Citrulline; alternate is present on R18. At R18 the chain carries Asymmetric dimethylarginine; by CARM1; alternate. K19 and K28 each carry N6-(2-hydroxyisobutyryl)lysine; alternate. At K19 the chain carries N6-(beta-hydroxybutyryl)lysine; alternate. N6-acetyllysine; alternate is present on residues K19 and K28. An N6-methyllysine; alternate mark is found at K19 and K28. 2 positions are modified to N6-glutaryllysine; alternate: K19 and K28. K19 is modified (N6-butyryllysine; alternate). K28 is subject to N6,N6,N6-trimethyllysine; alternate. Residue K28 is modified to N6,N6-dimethyllysine; alternate. The residue at position 29 (S29) is an ADP-ribosylserine; alternate. S29 bears the Phosphoserine; alternate; by AURKB, AURKC and RPS6KA5 mark. At S32 the chain carries Phosphoserine. N6-methyllysine is present on K38. Y42 is subject to Phosphotyrosine. K57 carries the post-translational modification N6,N6,N6-trimethyllysine; alternate. K57 carries the post-translational modification N6-(2-hydroxyisobutyryl)lysine; alternate. The residue at position 57 (K57) is an N6-(beta-hydroxybutyryl)lysine; alternate. K57 bears the N6-acetyllysine; alternate mark. At K57 the chain carries N6-glutaryllysine; alternate. An N6-succinyllysine; alternate modification is found at K57. K57 is subject to N6-methyllysine; by EHMT2; alternate. S58 bears the Phosphoserine mark. K65 and K80 each carry N6-(2-hydroxyisobutyryl)lysine; alternate. An N6-methyllysine; alternate mark is found at K65 and K80. K80 is modified (N6,N6,N6-trimethyllysine; alternate). Position 80 is an N6,N6-dimethyllysine; alternate (K80). The residue at position 80 (K80) is an N6-acetyllysine; alternate. K80 bears the N6-glutaryllysine; alternate mark. Position 80 is an N6-succinyllysine; alternate (K80). T81 carries the phosphothreonine modification. At S87 the chain carries Phosphoserine.

Belongs to the histone H3 family. As to quaternary structure, the nucleosome is a histone octamer containing two molecules each of H2A, H2B, H3 and H4 assembled in one H3-H4 heterotetramer and two H2A-H2B heterodimers. The octamer wraps approximately 147 bp of DNA. Post-translationally, acetylation is generally linked to gene activation. Acetylation on Lys-19 favors methylation at Arg-18. Citrullination at Arg-18 by PADI4 impairs methylation and represses transcription. In terms of processing, asymmetric dimethylation at Arg-18 (H3R17me2a) by CARM1 is linked to gene activation. Asymmetric dimethylation at Arg-3 (H3R2me2a) by PRMT6 is linked to gene repression and is mutually exclusive with H3 Lys-5 methylation (H3K4me2 and H3K4me3). H3R2me2a is present at the 3' of genes regardless of their transcription state and is enriched on inactive promoters, while it is absent on active promoters. Post-translationally, methylation at Lys-5 (H3K4me) and Lys-80 (H3K79me) are linked to gene activation. Methylation at Lys-5 (H3K4me) facilitates subsequent acetylation of H3 and H4. Methylation at Lys-80 (H3K79me) is associated with DNA double-strand break (DSB) responses and is a specific target for TP53BP1. Methylation at Lys-10 (H3K9me) and Lys-28 (H3K27me) are linked to gene repression. Methylation at Lys-10 (H3K9me) is a specific target for HP1 proteins (CBX1, CBX3 and CBX5) and prevents subsequent phosphorylation at Ser-11 (H3S10ph) and acetylation of H3 and H4. Methylation at Lys-5 (H3K4me) and Lys-80 (H3K79me) require preliminary monoubiquitination of H2B at 'Lys-120'. Methylation at Lys-10 (H3K9me) and Lys-28 (H3K27me) are enriched in inactive X chromosome chromatin. Monomethylation at Lys-57 (H3K56me1) by EHMT2/G9A in G1 phase promotes interaction with PCNA and is required for DNA replication. Phosphorylated at Thr-4 (H3T3ph) by HASPIN during prophase and dephosphorylated during anaphase. Phosphorylation at Ser-11 (H3S10ph) by AURKB is crucial for chromosome condensation and cell-cycle progression during mitosis and meiosis. In addition phosphorylation at Ser-11 (H3S10ph) by RPS6KA4 and RPS6KA5 is important during interphase because it enables the transcription of genes following external stimulation, like mitogens, stress, growth factors or UV irradiation and result in the activation of genes, such as c-fos and c-jun. Phosphorylation at Ser-11 (H3S10ph), which is linked to gene activation, prevents methylation at Lys-10 (H3K9me) but facilitates acetylation of H3 and H4. Phosphorylation at Ser-11 (H3S10ph) by AURKB mediates the dissociation of HP1 proteins (CBX1, CBX3 and CBX5) from heterochromatin. Phosphorylation at Ser-11 (H3S10ph) is also an essential regulatory mechanism for neoplastic cell transformation. Phosphorylated at Ser-29 (H3S28ph) by MAP3K20 isoform 1, RPS6KA5 or AURKB during mitosis or upon ultraviolet B irradiation. Phosphorylation at Thr-7 (H3T6ph) by PRKCB is a specific tag for epigenetic transcriptional activation that prevents demethylation of Lys-5 (H3K4me) by LSD1/KDM1A. At centromeres, specifically phosphorylated at Thr-12 (H3T11ph) from prophase to early anaphase, by DAPK3 and PKN1. Phosphorylation at Thr-12 (H3T11ph) by PKN1 or isoform M2 of PKM (PKM2) is a specific tag for epigenetic transcriptional activation that promotes demethylation of Lys-10 (H3K9me) by KDM4C/JMJD2C. Phosphorylation at Tyr-42 (H3Y41ph) by JAK2 promotes exclusion of CBX5 (HP1 alpha) from chromatin. In terms of processing, lysine deamination at Lys-5 (H3K4all) to form allysine is mediated by LOXL2. Allysine formation by LOXL2 only takes place on H3K4me3 and results in gene repression. Post-translationally, butyrylation of histones marks active promoters and competes with histone acetylation. It is present during late spermatogenesis. Succinylation at Lys-80 (H3K79succ) by KAT2A takes place with a maximum frequency around the transcription start sites of genes. It gives a specific tag for epigenetic transcription activation. In terms of processing, serine ADP-ribosylation constitutes the primary form of ADP-ribosylation of proteins in response to DNA damage. Serine ADP-ribosylation at Ser-11 (H3S10ADPr) is mutually exclusive with phosphorylation at Ser-11 (H3S10ph) and impairs acetylation at Lys-10 (H3K9ac).

Its subcellular location is the nucleus. It localises to the chromosome. In terms of biological role, core component of nucleosome. Nucleosomes wrap and compact DNA into chromatin, limiting DNA accessibility to the cellular machineries which require DNA as a template. Histones thereby play a central role in transcription regulation, DNA repair, DNA replication and chromosomal stability. DNA accessibility is regulated via a complex set of post-translational modifications of histones, also called histone code, and nucleosome remodeling. The polypeptide is Histone H3.3C-like (Bos taurus (Bovine)).